Reading from the N-terminus, the 1088-residue chain is Insulin receptor substrate 1-B (1088 aa).

Residues 15 to 117 (DVRKVGYLRK…WYQALVDLHN (103 aa)) enclose the PH domain. The residue at position 48 (tyrosine 48) is a Phosphotyrosine. The IRS-type PTB domain occupies 155-259 (FKEVWQVIMK…EAMKALSDEF (105 aa)). The segment at 259 to 428 (FRPRSKSQSS…GGFISSDEYG (170 aa)) is disordered. 4 stretches are compositionally biased toward low complexity: residues 264–278 (KSQS…ISVP), 302–312 (SATATSPAGGA), 379–400 (SPSA…GSTS), and 408–420 (SSAS…SDGG). At serine 307 the chain carries Phosphoserine. The residue at position 460 (tyrosine 460) is a Phosphotyrosine; by INSR. Residues 460 to 463 (YICM) carry the YXXM motif 1 motif. Composition is skewed to polar residues over residues 466 to 479 (SSSH…QRYQ) and 499 to 516 (SSGT…PSQS). Disordered regions lie at residues 466-485 (SSSH…RGEE) and 496-516 (RTHS…PSQS). 5 short sequence motifs (YXXM motif) span residues 521-524 (YTEM), 567-570 (YMPM), 584-587 (YMPM), 612-615 (YMMM), and 654-657 (YINM). Phosphotyrosine; by INSR occurs at positions 567 and 584. Tyrosine 612 carries the phosphotyrosine modification. Residues 704–785 (NLRISANSGH…PPEPKSPGEY (82 aa)) form a disordered region. Polar residues predominate over residues 707–718 (ISANSGHNLYTE). The span at 719-729 (DSSSSSTSSDS) shows a compositional bias: low complexity. Phosphotyrosine; by INSR is present on residues tyrosine 785 and tyrosine 823. A GRB2-binding region spans residues 785-787 (YVN). Positions 823-826 (YMNM) match the YXXM motif 7 motif. A compositionally biased stretch (polar residues) spans 840–863 (TSSYEPPNKPVNSVCPTETCSSSR). A disordered region spans residues 840–868 (TSSYEPPNKPVNSVCPTETCSSSRPPIRG). Position 875 is a phosphotyrosine; by INSR (tyrosine 875). 2 consecutive short sequence motifs (YXXM motif) follow at residues 875–878 (YMSM) and 909–912 (YAEM). The segment at 935 to 1006 (ASRSSLLGQG…SGEDVKRHSS (72 aa)) is disordered. Composition is skewed to polar residues over residues 946–961 (GPSA…NRNP) and 980–995 (ETFS…TTGP). Phosphotyrosine; by INSR occurs at positions 1037 and 1069.

In terms of assembly, interacts with the NPXY motif of tyrosine-phosphorylated igf1r and insr via the PTB domain. Binds to phosphatidylinositol 3-kinase p85 subunit at a low level in vitro prior to phosphorylation. Binding is greatly enhanced following tyrosine phosphorylation by insr and probably occurs via the phosphorylated YXXM motifs. Phosphorylation of Tyr-785 is required for grb2-binding.

In terms of biological role, may mediate the control of various cellular processes by insulin. When phosphorylated by the insulin receptor binds specifically to various cellular proteins containing SH2 domains such as phosphatidylinositol 3-kinase p85 subunit or grb2. Activates phosphatidylinositol 3-kinase when bound to the regulatory p85 subunit. This Xenopus laevis (African clawed frog) protein is Insulin receptor substrate 1-B (irs1-b).